A 287-amino-acid chain; its full sequence is 4,4'-diapophytoene synthase (287 aa).

Residues 18-21 (HSKS), Tyr41, and Arg45 each bind (2E,6E)-farnesyl diphosphate. Residues Asp48 and Asp52 each contribute to the Mg(2+) site. Gln165 contributes to the (2E,6E)-farnesyl diphosphate binding site. Asn168 contributes to the Mg(2+) binding site. Arg171 lines the (2E,6E)-farnesyl diphosphate pocket. Residue Asp172 coordinates Mg(2+). Residue Tyr248 participates in (2E,6E)-farnesyl diphosphate binding.

Belongs to the phytoene/squalene synthase family. CrtM subfamily. Mg(2+) is required as a cofactor.

It carries out the reaction 2 (2E,6E)-farnesyl diphosphate = 15-cis-4,4'-diapophytoene + 2 diphosphate. It functions in the pathway carotenoid biosynthesis; staphyloxanthin biosynthesis; staphyloxanthin from farnesyl diphosphate: step 1/5. Its function is as follows. Involved in the biosynthesis of the yellow-orange carotenoid staphyloxanthin, which plays a role in the virulence via its protective function against oxidative stress. Catalyzes the head-to-head condensation of two molecules of farnesyl diphosphate (FPP) into the colorless C(30) carotenoid 4,4'-diapophytoene (dehydrosqualene). The polypeptide is 4,4'-diapophytoene synthase (crtM) (Staphylococcus aureus (strain Mu50 / ATCC 700699)).